Consider the following 485-residue polypeptide: Glutamyl-tRNA(Gln) amidotransferase subunit A (485 aa).

Residues lysine 78 and serine 153 each act as charge relay system in the active site. The active-site Acyl-ester intermediate is serine 177.

The protein belongs to the amidase family. GatA subfamily. In terms of assembly, heterotrimer of A, B and C subunits.

The enzyme catalyses L-glutamyl-tRNA(Gln) + L-glutamine + ATP + H2O = L-glutaminyl-tRNA(Gln) + L-glutamate + ADP + phosphate + H(+). Allows the formation of correctly charged Gln-tRNA(Gln) through the transamidation of misacylated Glu-tRNA(Gln) in organisms which lack glutaminyl-tRNA synthetase. The reaction takes place in the presence of glutamine and ATP through an activated gamma-phospho-Glu-tRNA(Gln). This is Glutamyl-tRNA(Gln) amidotransferase subunit A from Bacillus cytotoxicus (strain DSM 22905 / CIP 110041 / 391-98 / NVH 391-98).